The chain runs to 105 residues: Small ribosomal subunit protein uS10 (105 aa).

The protein belongs to the universal ribosomal protein uS10 family. Part of the 30S ribosomal subunit.

Functionally, involved in the binding of tRNA to the ribosomes. The chain is Small ribosomal subunit protein uS10 from Synechococcus sp. (strain JA-3-3Ab) (Cyanobacteria bacterium Yellowstone A-Prime).